Reading from the N-terminus, the 239-residue chain is Phosphoribosylaminoimidazole-succinocarboxamide synthase (239 aa).

The protein belongs to the SAICAR synthetase family.

It carries out the reaction 5-amino-1-(5-phospho-D-ribosyl)imidazole-4-carboxylate + L-aspartate + ATP = (2S)-2-[5-amino-1-(5-phospho-beta-D-ribosyl)imidazole-4-carboxamido]succinate + ADP + phosphate + 2 H(+). It participates in purine metabolism; IMP biosynthesis via de novo pathway; 5-amino-1-(5-phospho-D-ribosyl)imidazole-4-carboxamide from 5-amino-1-(5-phospho-D-ribosyl)imidazole-4-carboxylate: step 1/2. This chain is Phosphoribosylaminoimidazole-succinocarboxamide synthase, found in Brevibacillus brevis (strain 47 / JCM 6285 / NBRC 100599).